A 759-amino-acid chain; its full sequence is TSK-associating protein 1 (759 aa).

Residues 1-29 (MEIYTMKTNFLVLALSLCILLSSFHEVSC) form the signal peptide. Positions 55-74 (GKDDEDQSAKIQSENQNNTT) are disordered. The span at 63–74 (AKIQSENQNNTT) shows a compositional bias: polar residues. EFE repeat repeat units follow at residues 91-138 (VGSV…DEEL), 139-176 (SAHR…DEEH), 177-215 (SAKR…DEEH), 216-254 (SAKR…DEEQ), 255-293 (SAKR…EEEH), 294-329 (AAKG…DKEH), 330-368 (FTAA…DDEQ), 369-407 (SAKR…NEEQ), 408-443 (SAKR…LEEE), and 444-473 (SAKR…DKEE). The interval 91–473 (VGSVSDESVG…GINAKADKEE (383 aa)) is 10 X approximate EFE repeat. 2 coiled-coil regions span residues 142–461 (RQKM…FEEA) and 685–734 (IKKL…AKDE). 4 disordered regions span residues 154 to 184 (EAAS…QSLL), 200 to 219 (QLKV…SAKR), 271 to 332 (AASK…HFTA), and 393 to 414 (LKAN…RKSM).

In terms of assembly, homomultimer. Interacts (via C-terminal domain) with GIP1, CSN1 (via N-terminal domain) and TSK (via TPR repeats). Post-translationally, binds calcium through the EFE repeats. In terms of tissue distribution, expressed preferentially in flowers and shoot apex.

Its subcellular location is the endoplasmic reticulum lumen. It is found in the nucleus envelope. It localises to the cytoplasm. In terms of biological role, involved in seedling development in the dark. May be involved, when interacting with TSK, in the organization of spindle microtubules and may participate, when interacting with GIP1, in structural links between the nuclear envelope and the cytoskeleton. The sequence is that of TSK-associating protein 1 (TSA1) from Arabidopsis thaliana (Mouse-ear cress).